We begin with the raw amino-acid sequence, 350 residues long: tRNA pseudouridine synthase D (350 aa).

Residue Phe-27 participates in substrate binding. Asp-80 functions as the Nucleophile in the catalytic mechanism. Residue Asn-129 coordinates substrate. In terms of domain architecture, TRUD spans 155–303 (GVPNYFGVQR…VDTTRRAINL (149 aa)). A substrate-binding site is contributed by Phe-329.

The protein belongs to the pseudouridine synthase TruD family.

It carries out the reaction uridine(13) in tRNA = pseudouridine(13) in tRNA. Its function is as follows. Responsible for synthesis of pseudouridine from uracil-13 in transfer RNAs. The chain is tRNA pseudouridine synthase D from Proteus mirabilis (strain HI4320).